A 293-amino-acid polypeptide reads, in one-letter code: 4-hydroxy-tetrahydrodipicolinate synthase (293 aa).

T45 lines the pyruvate pocket. Residue Y133 is the Proton donor/acceptor of the active site. K161 (schiff-base intermediate with substrate) is an active-site residue. I204 is a binding site for pyruvate.

This sequence belongs to the DapA family. In terms of assembly, homotetramer; dimer of dimers.

It is found in the cytoplasm. The catalysed reaction is L-aspartate 4-semialdehyde + pyruvate = (2S,4S)-4-hydroxy-2,3,4,5-tetrahydrodipicolinate + H2O + H(+). Its pathway is amino-acid biosynthesis; L-lysine biosynthesis via DAP pathway; (S)-tetrahydrodipicolinate from L-aspartate: step 3/4. Functionally, catalyzes the condensation of (S)-aspartate-beta-semialdehyde [(S)-ASA] and pyruvate to 4-hydroxy-tetrahydrodipicolinate (HTPA). The chain is 4-hydroxy-tetrahydrodipicolinate synthase from Edwardsiella ictaluri (strain 93-146).